Reading from the N-terminus, the 166-residue chain is Interferon gamma (166 aa).

The signal sequence occupies residues 1-23; it reads MNYTSYILAFQLCVILCSSGCNC. Pyrrolidone carboxylic acid is present on glutamine 24. Asparagine 39 and asparagine 106 each carry an N-linked (GlcNAc...) asparagine glycan.

This sequence belongs to the type II (or gamma) interferon family. In terms of assembly, homodimer. Interacts with IFNGR1 (via extracellular domain); this interaction promotes IFNGR1 dimerization. In terms of tissue distribution, released primarily from activated T lymphocytes.

It is found in the secreted. Functionally, type II interferon produced by immune cells such as T-cells and NK cells that plays crucial roles in antimicrobial, antiviral, and antitumor responses by activating effector immune cells and enhancing antigen presentation. Primarily signals through the JAK-STAT pathway after interaction with its receptor IFNGR1 to affect gene regulation. Upon IFNG binding, IFNGR1 intracellular domain opens out to allow association of downstream signaling components JAK2, JAK1 and STAT1, leading to STAT1 activation, nuclear translocation and transcription of IFNG-regulated genes. Many of the induced genes are transcription factors such as IRF1 that are able to further drive regulation of a next wave of transcription. Plays a role in class I antigen presentation pathway by inducing a replacement of catalytic proteasome subunits with immunoproteasome subunits. In turn, increases the quantity, quality, and repertoire of peptides for class I MHC loading. Increases the efficiency of peptide generation also by inducing the expression of activator PA28 that associates with the proteasome and alters its proteolytic cleavage preference. Up-regulates as well MHC II complexes on the cell surface by promoting expression of several key molecules such as cathepsins B/CTSB, H/CTSH, and L/CTSL. Participates in the regulation of hematopoietic stem cells during development and under homeostatic conditions by affecting their development, quiescence, and differentiation. The protein is Interferon gamma (IFNG) of Canis lupus familiaris (Dog).